We begin with the raw amino-acid sequence, 107 residues long: Nucleoid-associated protein RC1337 (107 aa).

Belongs to the YbaB/EbfC family. As to quaternary structure, homodimer.

Its subcellular location is the cytoplasm. The protein localises to the nucleoid. Functionally, binds to DNA and alters its conformation. May be involved in regulation of gene expression, nucleoid organization and DNA protection. The sequence is that of Nucleoid-associated protein RC1337 from Rickettsia conorii (strain ATCC VR-613 / Malish 7).